The following is a 1075-amino-acid chain: Protein nervous wreck (1075 aa).

Positions 11–289 constitute an F-BAR domain; the sequence is VKFLKNLHTE…QAQQLTREYN (279 aa). Disordered stretches follow at residues 361-381 and 431-536; these read LRDSGQRTDPNDPNGPDLDTK and SASS…DEPI. Residues 431–453 are compositionally biased toward polar residues; it reads SASSISMRTDASGQGENPSSDSF. Over residues 469–482 the composition is skewed to basic and acidic residues; it reads PKQEQQLSRDRTFS. Residues 493-512 are compositionally biased toward low complexity; that stretch reads SAAAASSAAAASSSMMASSA. SH3 domains follow at residues 542 to 603 and 658 to 721; these read EAIF…IDQE and SDVE…ECDE. 3 disordered regions span residues 722-747, 769-837, and 864-917; these read MGEPLSEGGDESPPPTAAPTFALPPA, SQDT…EKGA, and GADK…EGNA. Composition is skewed to pro residues over residues 733-747 and 809-818; these read SPPPTAAPTFALPPA and QPPPSLPPPQ. Over residues 819–837 the composition is skewed to low complexity; it reads LAKAGGSAPGSGSKVEKGA. Residues 883 to 897 are compositionally biased toward basic and acidic residues; it reads VSKEQPAEVAKKPDI.

In terms of assembly, homodimer. Interacts (via SH3 domain 1) with WASp. Interacts (via SH3 domain 1) with shi/dynamin. Interacts (via SH3 domain 2) with Dap160. Interacts (via F-BAR domain) with SH3PX1. Interacts (via SH3 domain 2) with Snx16. Identified in a complex with Syn and Syt1. Detected in larval body wall muscle. Detected at the neuromuscular junction, on motoneuron axons and axon terminals, at synaptic boutons in the periactive zone surrounding the synapse (at protein level). Detected on motoneuron axons and axon terminals, at synaptic boutons in the periactive zone surrounding the synapse.

The protein resides in the endomembrane system. It is found in the synapse. It localises to the cell projection. The protein localises to the axon. Its subcellular location is the presynaptic cell membrane. The protein resides in the cytoplasmic vesicle. It is found in the secretory vesicle. It localises to the synaptic vesicle. The protein localises to the recycling endosome. Its function is as follows. Adapter protein that provides a link between vesicular membrane traffic and the actin assembly machinery. Acts together with Cdc42 to stimulate actin nucleation mediated by WASp and the ARP2/3 complex. Binds to membranes enriched in phosphatidylinositol 4,5-bisphosphate and causes local membrane deformation. Required for normal structure and function of synapses at the neuromuscular junction. Plays a role in synaptic vesicle trafficking. Required for the release of a normal number of synaptic vesicles per action potential. The protein is Protein nervous wreck of Drosophila melanogaster (Fruit fly).